The sequence spans 355 residues: 3-dehydroquinate synthase (355 aa).

NAD(+) is bound by residues 71-76, 105-109, 129-130, lysine 142, lysine 151, and 169-172; these read EGEASK, GVVGD, TS, and TLKT. Glutamate 184, histidine 246, and histidine 263 together coordinate Zn(2+).

It belongs to the sugar phosphate cyclases superfamily. Dehydroquinate synthase family. Requires Co(2+) as cofactor. Zn(2+) is required as a cofactor. It depends on NAD(+) as a cofactor.

The protein resides in the cytoplasm. It catalyses the reaction 7-phospho-2-dehydro-3-deoxy-D-arabino-heptonate = 3-dehydroquinate + phosphate. The protein operates within metabolic intermediate biosynthesis; chorismate biosynthesis; chorismate from D-erythrose 4-phosphate and phosphoenolpyruvate: step 2/7. Its function is as follows. Catalyzes the conversion of 3-deoxy-D-arabino-heptulosonate 7-phosphate (DAHP) to dehydroquinate (DHQ). The polypeptide is 3-dehydroquinate synthase (Streptococcus suis (strain 98HAH33)).